Consider the following 467-residue polypeptide: UDP-N-acetylmuramate--L-alanine ligase (467 aa).

114-120 (GTHGKTT) is a binding site for ATP.

It belongs to the MurCDEF family.

It is found in the cytoplasm. The enzyme catalyses UDP-N-acetyl-alpha-D-muramate + L-alanine + ATP = UDP-N-acetyl-alpha-D-muramoyl-L-alanine + ADP + phosphate + H(+). It functions in the pathway cell wall biogenesis; peptidoglycan biosynthesis. In terms of biological role, cell wall formation. This chain is UDP-N-acetylmuramate--L-alanine ligase, found in Nitrobacter hamburgensis (strain DSM 10229 / NCIMB 13809 / X14).